The sequence spans 158 residues: Ribosome maturation factor RimP (158 aa).

This sequence belongs to the RimP family.

It localises to the cytoplasm. Functionally, required for maturation of 30S ribosomal subunits. The sequence is that of Ribosome maturation factor RimP from Lactobacillus acidophilus (strain ATCC 700396 / NCK56 / N2 / NCFM).